The following is a 207-amino-acid chain: Uracil phosphoribosyltransferase (207 aa).

5-phospho-alpha-D-ribose 1-diphosphate contacts are provided by residues arginine 77, arginine 102, and 129-137; that span reads DPMLATGGS. Uracil-binding positions include isoleucine 192 and 197-199; that span reads GDA. Position 198 (aspartate 198) interacts with 5-phospho-alpha-D-ribose 1-diphosphate.

The protein belongs to the UPRTase family. Mg(2+) is required as a cofactor.

The catalysed reaction is UMP + diphosphate = 5-phospho-alpha-D-ribose 1-diphosphate + uracil. Its pathway is pyrimidine metabolism; UMP biosynthesis via salvage pathway; UMP from uracil: step 1/1. Its activity is regulated as follows. Allosterically activated by GTP. Its function is as follows. Catalyzes the conversion of uracil and 5-phospho-alpha-D-ribose 1-diphosphate (PRPP) to UMP and diphosphate. This chain is Uracil phosphoribosyltransferase, found in Ureaplasma urealyticum serovar 10 (strain ATCC 33699 / Western).